Consider the following 145-residue polypeptide: Large ribosomal subunit protein uL15 (145 aa).

The interval 20–54 (GRGMASGKGKTATRGHKGQNSRSGGGVRPGFEGGQ) is disordered. The span at 42–52 (SGGGVRPGFEG) shows a compositional bias: gly residues.

Belongs to the universal ribosomal protein uL15 family. In terms of assembly, part of the 50S ribosomal subunit.

Binds to the 23S rRNA. In Mycoplasma mycoides subsp. mycoides SC (strain CCUG 32753 / NCTC 10114 / PG1), this protein is Large ribosomal subunit protein uL15.